Here is a 212-residue protein sequence, read N- to C-terminus: Ion-translocating oxidoreductase complex subunit G (212 aa).

A helical transmembrane segment spans residues 9 to 29; the sequence is GLLLALFALLCTGLVAVVNQQ. T176 is modified (FMN phosphoryl threonine).

This sequence belongs to the RnfG family. The complex is composed of six subunits: RnfA, RnfB, RnfC, RnfD, RnfE and RnfG. FMN serves as cofactor.

It is found in the cell inner membrane. Functionally, part of a membrane-bound complex that couples electron transfer with translocation of ions across the membrane. This Shewanella oneidensis (strain ATCC 700550 / JCM 31522 / CIP 106686 / LMG 19005 / NCIMB 14063 / MR-1) protein is Ion-translocating oxidoreductase complex subunit G.